The primary structure comprises 892 residues: E3 ubiquitin ligase PQT3-like (892 aa).

In terms of domain architecture, DWNN spans Ile3–Pro76. The CCHC-type zinc-finger motif lies at Cys210–Pro224. Ser285 carries the post-translational modification Phosphoserine. Residues Cys295–Cys333 form an RING-type; degenerate zinc finger. Disordered regions lie at residues Asp375–Asp408, Thr459–Asn493, and Met623–Ala892. Residue Ser404 is modified to Phosphoserine. Residues Met623–Asn644 show a composition bias toward basic and acidic residues. The segment covering Met647 to Arg666 has biased composition (polar residues). Positions His674–Pro692 are enriched in basic and acidic residues. The Nuclear localization signal motif lies at Thr693–Ser700. The segment covering Glu708–Arg745 has biased composition (basic and acidic residues). The segment covering Ser810–Ser832 has biased composition (low complexity). At Ser866 the chain carries Phosphoserine. Over residues Ser875–Ala892 the composition is skewed to basic and acidic residues.

Its subcellular location is the nucleus. It carries out the reaction S-ubiquitinyl-[E2 ubiquitin-conjugating enzyme]-L-cysteine + [acceptor protein]-L-lysine = [E2 ubiquitin-conjugating enzyme]-L-cysteine + N(6)-ubiquitinyl-[acceptor protein]-L-lysine.. The polypeptide is E3 ubiquitin ligase PQT3-like (Arabidopsis thaliana (Mouse-ear cress)).